Reading from the N-terminus, the 157-residue chain is Dihydrofolate reductase type 5 (157 aa).

The 155-residue stretch at 2–156 (KVSLMAAKAK…INYCYQIWQK (155 aa)) folds into the DHFR domain.

Belongs to the dihydrofolate reductase family. In terms of assembly, homodimer.

The enzyme catalyses (6S)-5,6,7,8-tetrahydrofolate + NADP(+) = 7,8-dihydrofolate + NADPH + H(+). It participates in cofactor biosynthesis; tetrahydrofolate biosynthesis; 5,6,7,8-tetrahydrofolate from 7,8-dihydrofolate: step 1/1. Key enzyme in folate metabolism. Catalyzes an essential reaction for de novo glycine and purine synthesis, and for DNA precursor synthesis. The polypeptide is Dihydrofolate reductase type 5 (dhfrV) (Escherichia coli).